The following is a 289-amino-acid chain: Thymidylate synthase (289 aa).

DUMP-binding positions include Arg-26 and 151-152; that span reads RR. The active-site Nucleophile is the Cys-171. DUMP is bound by residues 191–194, Asn-202, and 232–234; these read RSGD and HVY. Asp-194 provides a ligand contact to (6R)-5,10-methylene-5,6,7,8-tetrahydrofolate. Ala-288 is a (6R)-5,10-methylene-5,6,7,8-tetrahydrofolate binding site.

It belongs to the thymidylate synthase family. Homodimer.

The enzyme catalyses dUMP + (6R)-5,10-methylene-5,6,7,8-tetrahydrofolate = 7,8-dihydrofolate + dTMP. It participates in pyrimidine metabolism; dTTP biosynthesis. The sequence is that of Thymidylate synthase from Equus caballus (Horse).